The following is a 392-amino-acid chain: 4-hydroxybenzoate polyprenyltransferase, mitochondrial (392 aa).

The N-terminal 22 residues, 1-22, are a transit peptide targeting the mitochondrion; it reads MYALRHLRLQSARHFRSSYAAA. Helical transmembrane passes span 90–110, 115–135, 163–183, 184–204, 207–227, 236–256, 283–303, 307–327, and 339–359; these read IGTYLLFWPCAWSIALSADAG, LTMLGLFGTGALIMRGAGCTI, FDAIVFLSAQLSLGLLVLVQL, NWQSILLGASSLGLVITYPLM, VTYWPQLVLGMAFNWGALLGW, LAACLPLYLSGVCWTIVYDTI, VWLSGFTAAMLTGLSAAGWAC, VPYYAAVGVVGAHLVQQIYSL, and FISNHQVGLILFLGIVLGTLL. The disordered stretch occupies residues 365–392; sequence KKQRQSSLTTSTASSYVPALPQKPEVLS. Over residues 369–379 the composition is skewed to polar residues; sequence QSSLTTSTASS.

Belongs to the UbiA prenyltransferase family. Requires Mg(2+) as cofactor.

It localises to the mitochondrion inner membrane. The enzyme catalyses an all-trans-polyprenyl diphosphate + 4-hydroxybenzoate = a 4-hydroxy-3-(all-trans-polyprenyl)benzoate + diphosphate. The protein operates within cofactor biosynthesis; ubiquinone biosynthesis. In terms of biological role, catalyzes the prenylation of para-hydroxybenzoate (PHB) with an all-trans polyprenyl group. Mediates the second step in the final reaction sequence of coenzyme Q (CoQ) biosynthesis, which is the condensation of the polyisoprenoid side chain with PHB, generating the first membrane-bound Q intermediate. The protein is 4-hydroxybenzoate polyprenyltransferase, mitochondrial of Drosophila melanogaster (Fruit fly).